The primary structure comprises 225 residues: Rho GDP-dissociation inhibitor 3 (225 aa).

The protein belongs to the Rho GDI family.

It localises to the cytoplasm. Functionally, inhibits GDP/GTP exchange reaction of RhoB. Interacts specifically with the GDP- and GTP-bound forms of post-translationally processed Rhob and Rhog proteins, both of which show a growth-regulated expression in mammalian cells. Stimulates the release of the GDP-bound but not the GTP-bound RhoB protein. Also inhibits the GDP/GTP exchange of RhoB but shows less ability to inhibit the dissociation of prebound GTP. This is Rho GDP-dissociation inhibitor 3 (ARHGDIG) from Bos taurus (Bovine).